We begin with the raw amino-acid sequence, 572 residues long: Methionine--tRNA ligase (572 aa).

Residues 11–21 carry the 'HIGH' region motif; it reads PYINGIKHLGN. 4 residues coordinate Zn(2+): cysteine 143, cysteine 146, cysteine 156, and cysteine 159. Positions 346-350 match the 'KMSKS' region motif; that stretch reads QFSTS. Threonine 349 is a binding site for ATP.

Belongs to the class-I aminoacyl-tRNA synthetase family. MetG type 1 subfamily. As to quaternary structure, monomer. Requires Zn(2+) as cofactor.

It localises to the cytoplasm. It carries out the reaction tRNA(Met) + L-methionine + ATP = L-methionyl-tRNA(Met) + AMP + diphosphate. In terms of biological role, is required not only for elongation of protein synthesis but also for the initiation of all mRNA translation through initiator tRNA(fMet) aminoacylation. This Paracoccus denitrificans (strain Pd 1222) protein is Methionine--tRNA ligase.